Here is a 36-residue protein sequence, read N- to C-terminus: Mu/omega-theraphotoxin-Pmu1a (36 aa).

Intrachain disulfides connect Cys2–Cys16, Cys9–Cys21, and Cys15–Cys29.

Belongs to the neurotoxin 10 (Hwtx-1) family. In terms of tissue distribution, expressed by the venom gland.

It is found in the secreted. Its function is as follows. Gating-modifier toxin that targets both voltage-gated sodium and calcium channels, with described activities on human Nav1.7/SCN9A (IC(50)=5.5-7 nM), hNav1.6/SCN10A (IC(50)=9.9 nM), hNav1.4/SCN4A (IC(50)=62.9 nM), hCav3.2/CACNA1H (IC(50)=955.4 nM or 63.5% inhibition at 10 uM), hCav3.1/CACNA1G (95.1% inhibition at 10 uM), hCav3.3/CACNA1I (90.8% inhibition at 10 uM). Acts on Cav3 currents mainly by inducing a strong depolarizing shift in the current-voltage curve. The sequence is that of Mu/omega-theraphotoxin-Pmu1a from Pterinochilus murinus (Mombasa golden starburst baboon spider).